A 263-amino-acid polypeptide reads, in one-letter code: MFGRLYFMLLLSVGLVDCLSVVKDCITNNGEDYRGTQQKTSSGSTCLSWRSLNLKFKDSQTGVGDHNFCRNPDGSNKPWCYVSGSSGETKKEACDIRICQDQNATEAPAPEESVPTQGLTQRMVETFEPANSFPSQVEGAAVQPVKGVRQQVRSGPKKKKDLGTLGYVLAVFMMAIIILLGGGITMGYFYKRGRDLKKQHEQRVYEREMHRITLPLSAFANPTCELVDENTIVITAEPNNQTPTQEPVEGADPLMGSAGTPGA.

Residues 1–18 (MFGRLYFMLLLSVGLVDC) form the signal peptide. Topologically, residues 19 to 163 (LSVVKDCITN…SGPKKKKDLG (145 aa)) are extracellular. The region spanning 24-99 (DCITNNGEDY…KKEACDIRIC (76 aa)) is the Kringle domain. Intrachain disulfides connect Cys-25–Cys-99, Cys-46–Cys-80, and Cys-69–Cys-94. Asn-103 carries N-linked (GlcNAc...) asparagine glycosylation. The chain crosses the membrane as a helical span at residues 164 to 184 (TLGYVLAVFMMAIIILLGGGI). Residues 185-263 (TMGYFYKRGR…LMGSAGTPGA (79 aa)) lie on the Cytoplasmic side of the membrane. The tract at residues 239–263 (NNQTPTQEPVEGADPLMGSAGTPGA) is disordered.

The protein localises to the cell membrane. Functionally, negative regulator of hepatic phosphatidylinositol 3-kinase (PI3K) activity. This is Phosphoinositide-3-kinase-interacting protein 1 (pik3ip1) from Danio rerio (Zebrafish).